A 757-amino-acid polypeptide reads, in one-letter code: Neutral ceramidase 2 (757 aa).

The N-terminal stretch at 1 to 25 (MAVSLPLFQFILFLLLLLLSRTVYA) is a signal peptide. N-linked (GlcNAc...) asparagine glycosylation occurs at Asn311. Catalysis depends on Ser330, which acts as the Nucleophile. N-linked (GlcNAc...) asparagine glycosylation is found at Asn348 and Asn657.

This sequence belongs to the neutral ceramidase family.

The protein localises to the secreted. It is found in the endoplasmic reticulum. Its subcellular location is the golgi apparatus. The enzyme catalyses an N-acylsphing-4-enine + H2O = sphing-4-enine + a fatty acid. In terms of biological role, hydrolyzes the sphingolipid ceramide into sphingosine and free fatty acid. This Arabidopsis thaliana (Mouse-ear cress) protein is Neutral ceramidase 2.